The sequence spans 367 residues: Peptide chain release factor 2 (367 aa).

Gln251 is subject to N5-methylglutamine.

Belongs to the prokaryotic/mitochondrial release factor family. Methylated by PrmC. Methylation increases the termination efficiency of RF2.

It is found in the cytoplasm. Peptide chain release factor 2 directs the termination of translation in response to the peptide chain termination codons UGA and UAA. This Nautilia profundicola (strain ATCC BAA-1463 / DSM 18972 / AmH) protein is Peptide chain release factor 2.